Here is a 369-residue protein sequence, read N- to C-terminus: Nuclear pore complex-interacting protein family member A2 (369 aa).

Residues 325-346 (KTPPECLLTPLPPSAPPSADDN) are disordered.

The protein belongs to the NPIP family.

The protein is Nuclear pore complex-interacting protein family member A2 (NPIPA2) of Homo sapiens (Human).